Consider the following 622-residue polypeptide: WD repeat-containing protein 70 (622 aa).

A compositionally biased stretch (basic and acidic residues) spans 37 to 55 (TAVERSKKTLEAREKEEQI). The segment at 37 to 141 (TAVERSKKTL…DNPVKGIPDS (105 aa)) is disordered. Low complexity predominate over residues 67-84 (SSSRQKNTDTSSSSSGSE). Residues 120–132 (SDDEDEEQHEDDD) show a composition bias toward acidic residues. 7 WD repeats span residues 148–187 (HGTK…ASLQ), 195–236 (CECH…ECVK), 249–289 (GHTA…KHKG), 298–337 (GKRV…HTKF), 344–383 (TPGT…NPLN), 389–434 (ANYF…KVYE), and 437–476 (VTEA…QRGA). A compositionally biased stretch (basic and acidic residues) spans 508 to 533 (REPRQRSTRKQLEKDRLDPVKSHKPE). 2 disordered regions span residues 508–549 (REPR…GTHG) and 602–622 (AEVE…KRKI). The span at 539–549 (PGRGGRVGTHG) shows a compositional bias: gly residues. The span at 604 to 614 (VESDEEETDNE) shows a compositional bias: acidic residues.

It belongs to the WD repeat GAD-1 family.

The polypeptide is WD repeat-containing protein 70 (wdr70) (Xenopus tropicalis (Western clawed frog)).